The sequence spans 540 residues: Probable tubulin polyglutamylase TTLL2 (540 aa).

The region spanning 41–384 is the TTL domain; the sequence is LKPLVFRVDE…NGLRSEEKKC (344 aa). Residues K169, 175–176, 197–200, and 210–212 each bind ATP; these read RG, QKYI, and KCD. Residue R175 coordinates a protein. R236 provides a ligand contact to L-glutamate. Position 255-256 (255-256) interacts with ATP; the sequence is TN. L-glutamate-binding residues include S258 and K278. Residues D330, E343, and N345 each coordinate Mg(2+). K361 contacts L-glutamate. The interval 479–499 is disordered; the sequence is SQSQPHKMKGPAGDLPEAGST.

The protein belongs to the tubulin--tyrosine ligase family. Mg(2+) serves as cofactor. As to expression, highly expressed in brain, kidney, liver and testis. Expressed in heart, lung, muscle and spleen.

Its function is as follows. Probable tubulin polyglutamylase that generates side chains of glutamate on the gamma-carboxyl group of specific glutamate residues within the C-terminal tail of target proteins. Similar to TTLL1, may acquire enzymatic activity only in complex with other proteins as it is most likely lacking domains important for autonomous activity. Probably involved in the side-chain initiation step of the polyglutamylation reaction rather than the elongation step. This Mus musculus (Mouse) protein is Probable tubulin polyglutamylase TTLL2.